Here is a 528-residue protein sequence, read N- to C-terminus: Intestinal-type alkaline phosphatase (528 aa).

The N-terminal stretch at 1–19 (MQGPWVLLLLGLRLQLSLG) is a signal peptide. Asp-61 contacts Mg(2+). Zn(2+)-binding residues include Asp-61 and Ser-111. Ser-111 (phosphoserine intermediate) is an active-site residue. Cysteines 140 and 202 form a disulfide. N-linked (GlcNAc...) asparagine glycosylation occurs at Asn-141. Ser-174 provides a ligand contact to Mg(2+). Glu-235 contacts Ca(2+). Asn-268 is a glycosylation site (N-linked (GlcNAc...) asparagine). Positions 288, 289, and 304 each coordinate Ca(2+). Glu-330 is a Mg(2+) binding site. Positions 335, 339, 376, and 377 each coordinate Zn(2+). Asn-429 is a glycosylation site (N-linked (GlcNAc...) asparagine). Zn(2+) is bound at residue His-451. Cys-486 and Cys-493 are joined by a disulfide. Asp-503 carries GPI-anchor amidated aspartate lipidation. Residues 504 to 528 (AAHPVAASLPLLAGTLLLLGASAAP) constitute a propeptide, removed in mature form.

Belongs to the alkaline phosphatase family. As to quaternary structure, homodimer. Mg(2+) is required as a cofactor. It depends on Zn(2+) as a cofactor. Requires Ca(2+) as cofactor.

It is found in the cell membrane. It catalyses the reaction a phosphate monoester + H2O = an alcohol + phosphate. Alkaline phosphatase that can hydrolyze various phosphate compounds. This Homo sapiens (Human) protein is Intestinal-type alkaline phosphatase (ALPI).